Here is a 309-residue protein sequence, read N- to C-terminus: MRHFLTLNDLDKNEILDILSLAKDIKKEAKSRNYISYLKDQTLAMIFEKSSTRTRVSFEVGIHQLGGKGLFLSSRDIQLGRGEPVKDTARVLGRMVDMIMARVYKQSDLEELAKFSGVPVINGLSDDFHPVQLMSDLLTLSELGLNLQTMKVAYVGDGNNMTNSWLMAASKLGFELRVATPKGYEVPQWVLDIAKQNSKISCANLIITDNPKAAISGADVVTTDTWVSMGQEDEKEKRINDFAGYCVDDDMMSLAAKDAKFLHCLPAYRGYEVSEAVFEAHAGEIFSEAENRLHAQKAVMVWCDRKRYE.

Residues 51 to 54, glutamine 78, arginine 102, and 129 to 132 contribute to the carbamoyl phosphate site; these read STRT and HPVQ. L-ornithine contacts are provided by residues asparagine 160, aspartate 224, and 228–229; that span reads SM. Carbamoyl phosphate-binding positions include 264 to 265 and arginine 292; that span reads CL.

This sequence belongs to the aspartate/ornithine carbamoyltransferase superfamily. OTCase family.

Its subcellular location is the cytoplasm. The enzyme catalyses carbamoyl phosphate + L-ornithine = L-citrulline + phosphate + H(+). It participates in amino-acid biosynthesis; L-arginine biosynthesis; L-arginine from L-ornithine and carbamoyl phosphate: step 1/3. Functionally, reversibly catalyzes the transfer of the carbamoyl group from carbamoyl phosphate (CP) to the N(epsilon) atom of ornithine (ORN) to produce L-citrulline. The sequence is that of Ornithine carbamoyltransferase from Campylobacter fetus subsp. fetus (strain 82-40).